The primary structure comprises 180 residues: Oligoribonuclease (180 aa).

Positions L7–L168 constitute an Exonuclease domain. Y128 is an active-site residue.

It belongs to the oligoribonuclease family.

The protein resides in the cytoplasm. 3'-to-5' exoribonuclease specific for small oligoribonucleotides. This Dichelobacter nodosus (strain VCS1703A) protein is Oligoribonuclease.